We begin with the raw amino-acid sequence, 856 residues long: DNA mismatch repair protein MutS (856 aa).

Residue 617–624 (GPNMGGKS) participates in ATP binding.

This sequence belongs to the DNA mismatch repair MutS family.

Functionally, this protein is involved in the repair of mismatches in DNA. It is possible that it carries out the mismatch recognition step. This protein has a weak ATPase activity. In Psychromonas ingrahamii (strain DSM 17664 / CCUG 51855 / 37), this protein is DNA mismatch repair protein MutS.